A 437-amino-acid polypeptide reads, in one-letter code: GTPase Der (437 aa).

EngA-type G domains are found at residues 3 to 168 (PLIA…PVQE) and 178 to 353 (TNLA…ENRS). GTP contacts are provided by residues 9-16 (GRPNVGKS), 56-60 (DTGGY), 120-123 (NKVE), 184-191 (GRPNVGKS), 231-235 (DTAGL), and 296-299 (NKWD). Residues 354-437 (RKITTSALNR…VTVSLRFFKK (84 aa)) enclose the KH-like domain.

It belongs to the TRAFAC class TrmE-Era-EngA-EngB-Septin-like GTPase superfamily. EngA (Der) GTPase family. Associates with the 50S ribosomal subunit.

Its function is as follows. GTPase that plays an essential role in the late steps of ribosome biogenesis. This chain is GTPase Der, found in Chlorobium phaeobacteroides (strain DSM 266 / SMG 266 / 2430).